Consider the following 446-residue polypeptide: Glutamyl-tRNA reductase (446 aa).

Substrate contacts are provided by residues 49-52 (TCNR), Ser-109, 114-116 (ETQ), and Gln-120. The active-site Nucleophile is the Cys-50. 189-194 (GAGEMA) is a binding site for NADP(+).

It belongs to the glutamyl-tRNA reductase family. In terms of assembly, homodimer.

It carries out the reaction (S)-4-amino-5-oxopentanoate + tRNA(Glu) + NADP(+) = L-glutamyl-tRNA(Glu) + NADPH + H(+). It functions in the pathway porphyrin-containing compound metabolism; protoporphyrin-IX biosynthesis; 5-aminolevulinate from L-glutamyl-tRNA(Glu): step 1/2. In terms of biological role, catalyzes the NADPH-dependent reduction of glutamyl-tRNA(Glu) to glutamate 1-semialdehyde (GSA). The protein is Glutamyl-tRNA reductase of Macrococcus caseolyticus (strain JCSC5402) (Macrococcoides caseolyticum).